Here is a 396-residue protein sequence, read N- to C-terminus: Gap junction gamma-1 protein (396 aa).

The Cytoplasmic segment spans residues 1–22 (MSWSFLTRLLEEIHNHSTFVGK). The chain crosses the membrane as a helical span at residues 23 to 45 (IWLTVLIVFRIVLTAVGGESIYY). Residues 46–75 (DEQSKFVCNTEQPGCENVCYDAFAPLSHVR) lie on the Extracellular side of the membrane. The chain crosses the membrane as a helical span at residues 76 to 95 (FWVFQIILVATPSVMYLGYA). Residues 96–175 (IHKIAKMEHG…RRIREDGLMK (80 aa)) lie on the Cytoplasmic side of the membrane. The interval 146–165 (LESEKENKDQNQSKPKHDGR) is disordered. A compositionally biased stretch (basic and acidic residues) spans 147-156 (ESEKENKDQN). Residues 176 to 198 (IYVLQLLARTVFEVGFLVGQYFL) form a helical membrane-spanning segment. At 199-228 (YGFQVHPFYVCSRLPCPHKIDCFISRPTEK) the chain is on the extracellular side. A helical transmembrane segment spans residues 229 to 248 (TIFLLIMYGVTGLCLLLNIW). The Cytoplasmic segment spans residues 249-396 (EMLHLGFGTI…SGDGKTSVWI (148 aa)). The interval 356-396 (YNHQNNPHGSREKKAKVGSKAGSNKSSASSKSGDGKTSVWI) is disordered. Over residues 373 to 396 (GSKAGSNKSSASSKSGDGKTSVWI) the composition is skewed to low complexity.

It belongs to the connexin family. Gamma-type subfamily. A connexon is composed of a hexamer of connexins. Interacts with CNST.

The protein resides in the cell membrane. It localises to the cell junction. Its subcellular location is the gap junction. One gap junction consists of a cluster of closely packed pairs of transmembrane channels, the connexons, through which materials of low MW diffuse from one cell to a neighboring cell. This is Gap junction gamma-1 protein (GJC1) from Bos taurus (Bovine).